We begin with the raw amino-acid sequence, 126 residues long: Ribosome-binding factor A (126 aa).

Belongs to the RbfA family. In terms of assembly, monomer. Binds 30S ribosomal subunits, but not 50S ribosomal subunits or 70S ribosomes.

Its subcellular location is the cytoplasm. One of several proteins that assist in the late maturation steps of the functional core of the 30S ribosomal subunit. Associates with free 30S ribosomal subunits (but not with 30S subunits that are part of 70S ribosomes or polysomes). Required for efficient processing of 16S rRNA. May interact with the 5'-terminal helix region of 16S rRNA. This is Ribosome-binding factor A from Thermosipho africanus (strain TCF52B).